The sequence spans 348 residues: Holliday junction branch migration complex subunit RuvB (348 aa).

The tract at residues 1-182 (MRIELLNTPA…FGINSRFDYY (182 aa)) is large ATPase domain (RuvB-L). Residues Ile-21, Arg-22, Gly-63, Lys-66, Thr-67, Thr-68, 129–131 (EDF), Arg-172, Tyr-182, and Arg-219 contribute to the ATP site. A Mg(2+)-binding site is contributed by Thr-67. Residues 183 to 253 (SADLLEKIII…IAMTTLDCLE (71 aa)) are small ATPAse domain (RuvB-S). The head domain (RuvB-H) stretch occupies residues 256–348 (EEGLDDMDKK…EFPLEDDQRQ (93 aa)). Residues Arg-311 and Arg-316 each contribute to the DNA site.

The protein belongs to the RuvB family. In terms of assembly, homohexamer. Forms an RuvA(8)-RuvB(12)-Holliday junction (HJ) complex. HJ DNA is sandwiched between 2 RuvA tetramers; dsDNA enters through RuvA and exits via RuvB. An RuvB hexamer assembles on each DNA strand where it exits the tetramer. Each RuvB hexamer is contacted by two RuvA subunits (via domain III) on 2 adjacent RuvB subunits; this complex drives branch migration. In the full resolvosome a probable DNA-RuvA(4)-RuvB(12)-RuvC(2) complex forms which resolves the HJ.

It is found in the cytoplasm. It catalyses the reaction ATP + H2O = ADP + phosphate + H(+). Its function is as follows. The RuvA-RuvB-RuvC complex processes Holliday junction (HJ) DNA during genetic recombination and DNA repair, while the RuvA-RuvB complex plays an important role in the rescue of blocked DNA replication forks via replication fork reversal (RFR). RuvA specifically binds to HJ cruciform DNA, conferring on it an open structure. The RuvB hexamer acts as an ATP-dependent pump, pulling dsDNA into and through the RuvAB complex. RuvB forms 2 homohexamers on either side of HJ DNA bound by 1 or 2 RuvA tetramers; 4 subunits per hexamer contact DNA at a time. Coordinated motions by a converter formed by DNA-disengaged RuvB subunits stimulates ATP hydrolysis and nucleotide exchange. Immobilization of the converter enables RuvB to convert the ATP-contained energy into a lever motion, pulling 2 nucleotides of DNA out of the RuvA tetramer per ATP hydrolyzed, thus driving DNA branch migration. The RuvB motors rotate together with the DNA substrate, which together with the progressing nucleotide cycle form the mechanistic basis for DNA recombination by continuous HJ branch migration. Branch migration allows RuvC to scan DNA until it finds its consensus sequence, where it cleaves and resolves cruciform DNA. In Chlorobium limicola (strain DSM 245 / NBRC 103803 / 6330), this protein is Holliday junction branch migration complex subunit RuvB.